We begin with the raw amino-acid sequence, 325 residues long: RepFIB replication protein A (325 aa).

The disordered stretch occupies residues 279–298 (APNDESKENPLPPSPAEKVS).

This sequence belongs to the initiator RepB protein family.

Functionally, this protein is essential for plasmid replication; it is involved in copy control functions. In vitro, binds to the DNA repeat units, BCDD'D'', EFG and HIJ. The polypeptide is RepFIB replication protein A (repA) (Escherichia coli).